The primary structure comprises 284 residues: Probable palmitoyltransferase ZDHHC24 (284 aa).

Topologically, residues 1–18 (MGEPWAARGTEGAPARMP) are cytoplasmic. The helical transmembrane segment at 19 to 39 (VVFTALWAAVVVLELTYVMVL) threads the bilayer. Residues 40 to 52 (GPGPPPLEPLARA) lie on the Extracellular side of the membrane. The chain crosses the membrane as a helical span at residues 53-73 (LQLALAAYQLLNLLGNMGLFL). The Cytoplasmic segment spans residues 74 to 137 (RSDPSIRGVM…GRCVGFHNYR (64 aa)). The region spanning 94-144 (AYCYQCQSQVPPRSGHCSACRVCILRRDHHCRLLGRCVGFHNYRPFLCLLL) is the DHHC domain. Cys124 serves as the catalytic S-palmitoyl cysteine intermediate. The helical transmembrane segment at 138 to 158 (PFLCLLLHAAGVLLHISVLLS) threads the bilayer. Over 159 to 166 (PALSALLQ) the chain is Extracellular. Residues 167–187 (AHSALYTVALLLLPWLMLLTG) traverse the membrane as a helical segment. Residues 188 to 195 (KVSLAQFA) lie on the Cytoplasmic side of the membrane. Residues 196-216 (LAFVVDTCVAGALLCGAGLLF) traverse the membrane as a helical segment. Over 217–284 (HGMLLLRGQT…TPTDVGLVTS (68 aa)) the chain is Extracellular.

It belongs to the DHHC palmitoyltransferase family.

The protein resides in the membrane. The catalysed reaction is L-cysteinyl-[protein] + hexadecanoyl-CoA = S-hexadecanoyl-L-cysteinyl-[protein] + CoA. Its function is as follows. Probable palmitoyltransferase that could catalyze the addition of palmitate onto various protein substrates. The chain is Probable palmitoyltransferase ZDHHC24 (Zdhhc24) from Rattus norvegicus (Rat).